Reading from the N-terminus, the 1333-residue chain is DNA-directed RNA polymerase subunit beta' (1333 aa).

Zn(2+) is bound by residues Cys-60, Cys-62, Cys-75, and Cys-78. Positions 535, 537, and 539 each coordinate Mg(2+). Positions 901, 983, 990, and 993 each coordinate Zn(2+).

Belongs to the RNA polymerase beta' chain family. The RNAP catalytic core consists of 2 alpha, 1 beta, 1 beta' and 1 omega subunit. When a sigma factor is associated with the core the holoenzyme is formed, which can initiate transcription. Mg(2+) serves as cofactor. The cofactor is Zn(2+).

It carries out the reaction RNA(n) + a ribonucleoside 5'-triphosphate = RNA(n+1) + diphosphate. DNA-dependent RNA polymerase catalyzes the transcription of DNA into RNA using the four ribonucleoside triphosphates as substrates. The polypeptide is DNA-directed RNA polymerase subunit beta' (Corynebacterium efficiens (strain DSM 44549 / YS-314 / AJ 12310 / JCM 11189 / NBRC 100395)).